A 520-amino-acid chain; its full sequence is GMP synthase [glutamine-hydrolyzing] (520 aa).

Residues 9–202 enclose the Glutamine amidotransferase type-1 domain; sequence TILIIDFGSQ…VHRIVGVKPG (194 aa). Cysteine 86 functions as the Nucleophile in the catalytic mechanism. Residues histidine 176 and glutamate 178 contribute to the active site. The 193-residue stretch at 203-395 folds into the GMPS ATP-PPase domain; it reads WTMGAYREQA…LGLPDSFIGR (193 aa). Position 230 to 236 (230 to 236) interacts with ATP; the sequence is SGGVDSS.

Homodimer.

The enzyme catalyses XMP + L-glutamine + ATP + H2O = GMP + L-glutamate + AMP + diphosphate + 2 H(+). It participates in purine metabolism; GMP biosynthesis; GMP from XMP (L-Gln route): step 1/1. Catalyzes the synthesis of GMP from XMP. This is GMP synthase [glutamine-hydrolyzing] from Brucella abortus (strain S19).